The sequence spans 294 residues: MVGQTEIPARPLEPALYLVATPIGNLADITLRALETLAAADIVACEDTRVSRVLLDRYGIRRRTTAYHEHNAGEAGPKLIAALQGGQSVALISDAGTPLVSDPGYRLVGEAIDHGIRVVPIPGPSAPLAALTASGLPSDAFLFAGFLPVKVGQRLTRLEALKAVPATLIFFESPRRLAESLGAMVEALGGERKAAIGRELTKTFEEMRTGTLRALADHYAAADTPKGEIVVCVGPAEAKADEPADIDRLLLSLAAEMPASKAASEAAKMTGGQKQALYRRLLELKDTSGEGDGG.

This sequence belongs to the methyltransferase superfamily. RsmI family.

It localises to the cytoplasm. The enzyme catalyses cytidine(1402) in 16S rRNA + S-adenosyl-L-methionine = 2'-O-methylcytidine(1402) in 16S rRNA + S-adenosyl-L-homocysteine + H(+). Catalyzes the 2'-O-methylation of the ribose of cytidine 1402 (C1402) in 16S rRNA. The chain is Ribosomal RNA small subunit methyltransferase I from Mesorhizobium japonicum (strain LMG 29417 / CECT 9101 / MAFF 303099) (Mesorhizobium loti (strain MAFF 303099)).